A 313-amino-acid polypeptide reads, in one-letter code: Ribosomal RNA small subunit methyltransferase H (313 aa).

Residues 35–37, Asp55, Phe79, Asp100, and Gln107 contribute to the S-adenosyl-L-methionine site; that span reads GGH.

It belongs to the methyltransferase superfamily. RsmH family.

The protein resides in the cytoplasm. The enzyme catalyses cytidine(1402) in 16S rRNA + S-adenosyl-L-methionine = N(4)-methylcytidine(1402) in 16S rRNA + S-adenosyl-L-homocysteine + H(+). In terms of biological role, specifically methylates the N4 position of cytidine in position 1402 (C1402) of 16S rRNA. The polypeptide is Ribosomal RNA small subunit methyltransferase H (Burkholderia pseudomallei (strain K96243)).